Reading from the N-terminus, the 90-residue chain is RNA-binding protein Hfq (90 aa).

Residues 9–68 (DPFLNALRRERVPVSIYLVNGIKLQGQVESFDQFVILLKNTVSQMVYKHAISTVVPARPF) form the Sm domain.

This sequence belongs to the Hfq family. Homohexamer.

Functionally, RNA chaperone that binds small regulatory RNA (sRNAs) and mRNAs to facilitate mRNA translational regulation in response to envelope stress, environmental stress and changes in metabolite concentrations. Also binds with high specificity to tRNAs. The protein is RNA-binding protein Hfq of Shewanella baltica (strain OS155 / ATCC BAA-1091).